The chain runs to 441 residues: uncharacterized protein (441 aa).

The segment covering Thr121–Gln143 has biased composition (low complexity). 2 disordered regions span residues Thr121 to Ser146 and Ser371 to Asn392. The span at Pro382–Pro391 shows a compositional bias: polar residues.

This is an uncharacterized protein from Dictyostelium discoideum (Social amoeba).